The following is a 442-amino-acid chain: tRNA modification GTPase MnmE (442 aa).

R24, E82, and K120 together coordinate (6S)-5-formyl-5,6,7,8-tetrahydrofolate. The region spanning 217–367 (GLHIVITGEP…LVSVIKEKVE (151 aa)) is the TrmE-type G domain. GTP contacts are provided by residues 227-232 (NVGKST), 246-252 (SEYVGTT), and 271-274 (DTAG). 2 residues coordinate Mg(2+): S231 and T252. K442 lines the (6S)-5-formyl-5,6,7,8-tetrahydrofolate pocket.

Belongs to the TRAFAC class TrmE-Era-EngA-EngB-Septin-like GTPase superfamily. TrmE GTPase family. Homodimer. Heterotetramer of two MnmE and two MnmG subunits. Requires K(+) as cofactor.

It is found in the cytoplasm. Exhibits a very high intrinsic GTPase hydrolysis rate. Involved in the addition of a carboxymethylaminomethyl (cmnm) group at the wobble position (U34) of certain tRNAs, forming tRNA-cmnm(5)s(2)U34. The polypeptide is tRNA modification GTPase MnmE (Wolbachia sp. subsp. Brugia malayi (strain TRS)).